The following is an 88-amino-acid chain: uncharacterized protein (88 aa).

The N-terminal stretch at 1–22 is a signal peptide; that stretch reads MGLTLKEHAEVCMALAESSASA.

This is an uncharacterized protein from Haemophilus influenzae (strain ATCC 51907 / DSM 11121 / KW20 / Rd).